The primary structure comprises 199 residues: MAEIILNVEIRDRAGTGGSRETRRQGKVPGVLYGGPLAPVNIAVKGNEFRKALHTGKLLGHLVTLQHGDEKQSVIAKAVQFHPVTDEPLHFDLYRVDEHQLIKIEIPVHFKNHDISVGLKKGGTLEIIRHTVELACPADKIPEELVIDLASHDIGDTIRISEIKLPEGVRPAMERDFVIANLKASAASQSTEGDTTAEA.

The protein belongs to the bacterial ribosomal protein bL25 family. CTC subfamily. In terms of assembly, part of the 50S ribosomal subunit; part of the 5S rRNA/L5/L18/L25 subcomplex. Contacts the 5S rRNA. Binds to the 5S rRNA independently of L5 and L18.

Functionally, this is one of the proteins that binds to the 5S RNA in the ribosome where it forms part of the central protuberance. The polypeptide is Large ribosomal subunit protein bL25 (Caulobacter sp. (strain K31)).